The sequence spans 105 residues: Large ribosomal subunit protein uL24 (105 aa).

It belongs to the universal ribosomal protein uL24 family. As to quaternary structure, part of the 50S ribosomal subunit.

Its function is as follows. One of two assembly initiator proteins, it binds directly to the 5'-end of the 23S rRNA, where it nucleates assembly of the 50S subunit. Functionally, one of the proteins that surrounds the polypeptide exit tunnel on the outside of the subunit. This is Large ribosomal subunit protein uL24 from Thermotoga petrophila (strain ATCC BAA-488 / DSM 13995 / JCM 10881 / RKU-1).